The following is a 786-amino-acid chain: Endonuclease MutS2 (786 aa).

Position 332–339 (332–339 (GPNTGGKT)) interacts with ATP. The Smr domain occupies 711–786 (IDLRGMDSEE…GTGVTVVILK (76 aa)).

Belongs to the DNA mismatch repair MutS family. MutS2 subfamily. In terms of assembly, homodimer. Binds to stalled ribosomes, contacting rRNA.

Functionally, endonuclease that is involved in the suppression of homologous recombination and thus may have a key role in the control of bacterial genetic diversity. In terms of biological role, acts as a ribosome collision sensor, splitting the ribosome into its 2 subunits. Detects stalled/collided 70S ribosomes which it binds and splits by an ATP-hydrolysis driven conformational change. Acts upstream of the ribosome quality control system (RQC), a ribosome-associated complex that mediates the extraction of incompletely synthesized nascent chains from stalled ribosomes and their subsequent degradation. Probably generates substrates for RQC. The sequence is that of Endonuclease MutS2 from Clostridium perfringens (strain 13 / Type A).